Reading from the N-terminus, the 177-residue chain is MSRVANNPVVLPSGVEVKLNGQEINVKGSKGALQFTIHQAVEVKQEENVLRFAARDGAKQSRALAGTTRALVNNMVTGVSTGWERKLQLTGVGYRAQAQGKKLNLTLGFSHPVEYELPEGVTAETPSNTEVVIRGIDKQQVGQVAAEIRAFRPPEPYKGKGVRYADEQVRRKEAKKK.

Positions 154–171 are enriched in basic and acidic residues; that stretch reads PEPYKGKGVRYADEQVRR. The interval 154 to 177 is disordered; sequence PEPYKGKGVRYADEQVRRKEAKKK.

It belongs to the universal ribosomal protein uL6 family. In terms of assembly, part of the 50S ribosomal subunit.

Its function is as follows. This protein binds to the 23S rRNA, and is important in its secondary structure. It is located near the subunit interface in the base of the L7/L12 stalk, and near the tRNA binding site of the peptidyltransferase center. This Marinobacter nauticus (strain ATCC 700491 / DSM 11845 / VT8) (Marinobacter aquaeolei) protein is Large ribosomal subunit protein uL6.